The sequence spans 151 residues: Deoxyuridine 5'-triphosphate nucleotidohydrolase (151 aa).

Substrate-binding positions include 70 to 72, Asn-83, 87 to 89, and Met-97; these read RSG and LID.

The protein belongs to the dUTPase family. Requires Mg(2+) as cofactor.

It carries out the reaction dUTP + H2O = dUMP + diphosphate + H(+). It functions in the pathway pyrimidine metabolism; dUMP biosynthesis; dUMP from dCTP (dUTP route): step 2/2. Functionally, this enzyme is involved in nucleotide metabolism: it produces dUMP, the immediate precursor of thymidine nucleotides and it decreases the intracellular concentration of dUTP so that uracil cannot be incorporated into DNA. The polypeptide is Deoxyuridine 5'-triphosphate nucleotidohydrolase (Histophilus somni (strain 129Pt) (Haemophilus somnus)).